The primary structure comprises 420 residues: Zinc finger protein 362 (420 aa).

Disordered stretches follow at residues 1-28 (MSRSSPSGKGHSRMAEPRFNNPYFWPPP), 54-80 (RPPHLPPTSASSQQPLLVPPAPAESSQ), and 115-155 (VTGL…SQSR). The segment covering 121-154 (STRTPSVSTSESSAGAGTGTGTSTPSTPTTTSQS) has biased composition (low complexity). Position 162 is a phosphothreonine (Thr162). The segment at 178-202 (TIQGHGLLGPPKSERGRKKIKAENP) is disordered. A Glycyl lysine isopeptide (Lys-Gly) (interchain with G-Cter in SUMO2) cross-link involves residue Lys198. C2H2-type zinc fingers lie at residues 227-249 (YRCKVCPLTFFTKSEMQIHSKSH), 255-277 (HKCPHCSKSFANASYLAQHLRIH), 283-305 (YHCSYCDKSFRQLSHLQQHTRIH), 311-335 (YKCPHPGCEKAFTQLSNLQSHQRQH), 341-363 (YKCPNCYRAYSDSASLQIHLSAH), and 371-393 (YCCSMCGRAYTSETYLMKHMSKH). Ser404 bears the Phosphoserine mark.

Belongs to the krueppel C2H2-type zinc-finger protein family.

It localises to the nucleus. May be involved in transcriptional regulation. The chain is Zinc finger protein 362 (ZNF362) from Homo sapiens (Human).